A 1321-amino-acid chain; its full sequence is Adhesion G protein-coupled receptor A3 (1321 aa).

The N-terminal stretch at 1 to 33 (MEPPGRRRGRAQPPLLLPLSLLALLALLGGGGG) is a signal peptide. The Extracellular segment spans residues 34–761 (GGAAALPAGC…YTQAASLLHP (728 aa)). N-linked (GlcNAc...) asparagine glycans are attached at residues N81 and N98. LRR repeat units lie at residues 82 to 103 (RTVT…SFSG), 106 to 127 (LLER…AFWG), 130 to 151 (SLKR…IFRG), and 154 to 175 (NLVR…TFDY). 7 N-linked (GlcNAc...) asparagine glycosylation sites follow: N159, N206, N301, N332, N433, N453, and N592. Residues 187–237 (EYLLCDCNILWMHRWVKEKNITVRDTRCVYPKSLQAQPVTGVKQELLTCDP) form the LRRCT domain. The 99-residue stretch at 242–340 (PSFYMTPSHR…GNNTRTVDIV (99 aa)) folds into the Ig-like domain. A disulfide bridge links C264 with C324. The GAIN-B domain maps to 583 to 750 (LDKQLSFKCN…AVLMDLTGSE (168 aa)). Residues 594 to 620 (SNTFSSLALKNTIVEASIQLPPSLFSP) form an LRR 5 repeat. N-linked (GlcNAc...) asparagine glycosylation is found at N652, N687, and N728. The GPS stretch occupies residues 701–750 (AARWDFDLLNGQGGWKSDGCHILYSDENITTIQCYSLSNYAVLMDLTGSE). A disulfide bond links C720 and C734. A helical membrane pass occupies residues 762–782 (VVYTTAIILLLCLLAVIVSYI). Residues 783 to 796 (YHHSLIRISLKSWH) lie on the Cytoplasmic side of the membrane. A helical membrane pass occupies residues 797 to 817 (MLVNLCFHIFLTCVVFVGGIT). Topologically, residues 818-826 (QTRNASICQ) are extracellular. The N-linked (GlcNAc...) asparagine glycan is linked to N821. A helical transmembrane segment spans residues 827–847 (AVGIILHYSTLATVLWVGVTA). Residues 848-876 (RNIYKQVTKKAKRCQDPDEPPPPPRPMLR) lie on the Cytoplasmic side of the membrane. The chain crosses the membrane as a helical span at residues 877–897 (FYLIGGGIPIIVCGITAAANI). At 898 to 919 (KNYGSRPNAPYCWMAWEPSLGA) the chain is on the extracellular side. Residues 920–940 (FYGPASFITFVNCMYFLSIFI) traverse the membrane as a helical segment. The Cytoplasmic portion of the chain corresponds to 941–996 (QLKRHPERKYELKEPTEEQQRLAANENGEINHQDSMSLSLISTSALENEHTFHSQL). The helical transmembrane segment at 997-1017 (LGASLTLLLYVALWMFGALAV) threads the bilayer. Residues 1018–1024 (SLYYPLD) are Extracellular-facing. Residues 1025-1045 (LVFSFVFGATSLSFSAFFVVH) form a helical membrane-spanning segment. At 1046–1321 (HCVNREDVRL…TGLWKHETTV (276 aa)) the chain is on the cytoplasmic side. The span at 1073–1083 (NVQPPNSNGTN) shows a compositional bias: polar residues. Disordered stretches follow at residues 1073 to 1094 (NVQP…NSSA), 1198 to 1219 (VEGS…GHSR), 1231 to 1265 (QYNP…KKDA), and 1294 to 1321 (SNGQ…ETTV). Positions 1233 to 1250 (NPPQQDSSDACSTLPKSS) are enriched in polar residues. The short motif at 1319–1321 (TTV) is the PDZ-binding element.

This sequence belongs to the G-protein coupled receptor 2 family. Adhesion G-protein coupled receptor (ADGR) subfamily. In terms of assembly, interacts (via PDZ-binding motif) with DLG1.

Its subcellular location is the membrane. In terms of biological role, orphan receptor that may have a role in planar cell polarity pathway. The polypeptide is Adhesion G protein-coupled receptor A3 (Homo sapiens (Human)).